The chain runs to 916 residues: DNA ligase 1 (916 aa).

The span at methionine 1 to glutamine 10 shows a compositional bias: polar residues. The segment at methionine 1 to threonine 197 is disordered. Positions lysine 13–asparagine 43 are enriched in basic and acidic residues. Phosphoserine occurs at positions 49, 51, and 65. Threonine 77 carries the phosphothreonine modification. The span at proline 99 to methionine 111 shows a compositional bias: polar residues. Residues proline 119–proline 129 show a composition bias toward basic residues. Lysine 144 is subject to N6-acetyllysine. Basic and acidic residues predominate over residues lysine 153–aspartate 177. Residues proline 185 to threonine 197 are compositionally biased toward polar residues. Threonine 193 carries the post-translational modification Phosphothreonine. Lysine 225 is subject to N6-acetyllysine. Residues serine 228 and serine 229 each carry the phosphoserine modification. Threonine 232 carries the phosphothreonine modification. The tract at residues proline 236–proline 266 is disordered. The segment covering valine 238–glycine 257 has biased composition (basic and acidic residues). The tract at residues arginine 447–serine 456 is interaction with target DNA. ATP is bound at residue glutamate 564. The active-site N6-AMP-lysine intermediate is lysine 566. Positions 571 and 619 each coordinate ATP. Glutamate 619 contributes to the Mg(2+) binding site. The segment at lysine 640–lysine 642 is interaction with target DNA. Residue glutamate 718 participates in Mg(2+) binding. Residues lysine 723 and lysine 742 each contribute to the ATP site. Position 796 is a phosphothreonine (threonine 796). 4 positions are modified to phosphoserine: serine 799, serine 906, serine 907, and serine 911. The segment at aspartate 879 to tyrosine 916 is disordered. The span at glutamate 883–aspartate 908 shows a compositional bias: polar residues.

It belongs to the ATP-dependent DNA ligase family. As to quaternary structure, interacts with PCNA. Interacts with POLB. The cofactor is Mg(2+).

The protein localises to the nucleus. It carries out the reaction ATP + (deoxyribonucleotide)n-3'-hydroxyl + 5'-phospho-(deoxyribonucleotide)m = (deoxyribonucleotide)n+m + AMP + diphosphate.. Its function is as follows. DNA ligase that seals nicks in double-stranded during DNA repair. Also involved in DNA replication and DNA recombination. The chain is DNA ligase 1 (Lig1) from Mus musculus (Mouse).